Consider the following 183-residue polypeptide: NAD(P)H-quinone oxidoreductase subunit I, chloroplastic (183 aa).

2 4Fe-4S ferredoxin-type domains span residues 55 to 84 (GRIHFEFDKCIACEVCVRVCPINLPVVDWE) and 95 to 124 (KNYSIDFGVCIFCGNCVEYCPTNCLSMTEE). [4Fe-4S] cluster-binding residues include cysteine 64, cysteine 67, cysteine 70, cysteine 74, cysteine 104, cysteine 107, cysteine 110, and cysteine 114.

Belongs to the complex I 23 kDa subunit family. As to quaternary structure, NDH is composed of at least 16 different subunits, 5 of which are encoded in the nucleus. The cofactor is [4Fe-4S] cluster.

It localises to the plastid. It is found in the chloroplast thylakoid membrane. It catalyses the reaction a plastoquinone + NADH + (n+1) H(+)(in) = a plastoquinol + NAD(+) + n H(+)(out). The catalysed reaction is a plastoquinone + NADPH + (n+1) H(+)(in) = a plastoquinol + NADP(+) + n H(+)(out). In terms of biological role, NDH shuttles electrons from NAD(P)H:plastoquinone, via FMN and iron-sulfur (Fe-S) centers, to quinones in the photosynthetic chain and possibly in a chloroplast respiratory chain. The immediate electron acceptor for the enzyme in this species is believed to be plastoquinone. Couples the redox reaction to proton translocation, and thus conserves the redox energy in a proton gradient. In Marchantia polymorpha (Common liverwort), this protein is NAD(P)H-quinone oxidoreductase subunit I, chloroplastic.